The sequence spans 298 residues: Ketohexokinase (298 aa).

Residues aspartate 15, glycine 41, asparagine 42, and asparagine 45 each contribute to the beta-D-fructose site. ATP contacts are provided by residues arginine 108, alanine 226–glycine 229, and glycine 255–aspartate 258. Residue aspartate 258 participates in beta-D-fructose binding.

Belongs to the carbohydrate kinase PfkB family. As to quaternary structure, homodimer.

The catalysed reaction is beta-D-fructose + ATP = beta-D-fructose 1-phosphate + ADP + H(+). It participates in carbohydrate metabolism; fructose metabolism. Requires potassium. Inhibition by ADP. Catalyzes the phosphorylation of the ketose sugar fructose to fructose-1-phosphate. The chain is Ketohexokinase from Mus musculus (Mouse).